The chain runs to 290 residues: Phosphoribosylaminoimidazole-succinocarboxamide synthase (290 aa).

It belongs to the SAICAR synthetase family.

The catalysed reaction is 5-amino-1-(5-phospho-D-ribosyl)imidazole-4-carboxylate + L-aspartate + ATP = (2S)-2-[5-amino-1-(5-phospho-beta-D-ribosyl)imidazole-4-carboxamido]succinate + ADP + phosphate + 2 H(+). It participates in purine metabolism; IMP biosynthesis via de novo pathway; 5-amino-1-(5-phospho-D-ribosyl)imidazole-4-carboxamide from 5-amino-1-(5-phospho-D-ribosyl)imidazole-4-carboxylate: step 1/2. This Haemophilus influenzae (strain PittGG) protein is Phosphoribosylaminoimidazole-succinocarboxamide synthase.